The primary structure comprises 233 residues: Ribonuclease HII (233 aa).

Residues 21 to 211 (KVIAGVDEVG…LDALPQWRHL (191 aa)) enclose the RNase H type-2 domain. Residues D27, E28, and D119 each contribute to the a divalent metal cation site.

This sequence belongs to the RNase HII family. Mn(2+) is required as a cofactor. It depends on Mg(2+) as a cofactor.

Its subcellular location is the cytoplasm. The catalysed reaction is Endonucleolytic cleavage to 5'-phosphomonoester.. In terms of biological role, endonuclease that specifically degrades the RNA of RNA-DNA hybrids. This Streptomyces avermitilis (strain ATCC 31267 / DSM 46492 / JCM 5070 / NBRC 14893 / NCIMB 12804 / NRRL 8165 / MA-4680) protein is Ribonuclease HII.